The sequence spans 100 residues: NADH-quinone oxidoreductase subunit K (100 aa).

A run of 3 helical transmembrane segments spans residues 4-24 (LQHGLILAAILFVLGLTGLLV), 28-48 (LLFMLISLEVMINAAALAFIV), and 60-80 (VMYILAISLAAAEASIGLALL).

This sequence belongs to the complex I subunit 4L family. In terms of assembly, NDH-1 is composed of 13 different subunits. Subunits NuoA, H, J, K, L, M, N constitute the membrane sector of the complex.

The protein localises to the cell inner membrane. It carries out the reaction a quinone + NADH + 5 H(+)(in) = a quinol + NAD(+) + 4 H(+)(out). NDH-1 shuttles electrons from NADH, via FMN and iron-sulfur (Fe-S) centers, to quinones in the respiratory chain. The immediate electron acceptor for the enzyme in this species is believed to be ubiquinone. Couples the redox reaction to proton translocation (for every two electrons transferred, four hydrogen ions are translocated across the cytoplasmic membrane), and thus conserves the redox energy in a proton gradient. The sequence is that of NADH-quinone oxidoreductase subunit K from Serratia proteamaculans (strain 568).